Here is a 314-residue protein sequence, read N- to C-terminus: tRNA dimethylallyltransferase (314 aa).

Position 9–16 (9–16 (GPTAVGKT)) interacts with ATP. 11–16 (TAVGKT) lines the substrate pocket. The interval 34–37 (DSMQ) is interaction with substrate tRNA.

Belongs to the IPP transferase family. Monomer. Mg(2+) is required as a cofactor.

The enzyme catalyses adenosine(37) in tRNA + dimethylallyl diphosphate = N(6)-dimethylallyladenosine(37) in tRNA + diphosphate. Catalyzes the transfer of a dimethylallyl group onto the adenine at position 37 in tRNAs that read codons beginning with uridine, leading to the formation of N6-(dimethylallyl)adenosine (i(6)A). This is tRNA dimethylallyltransferase from Clostridium tetani (strain Massachusetts / E88).